Reading from the N-terminus, the 405-residue chain is 4-hydroxy-3-methylbut-2-en-1-yl diphosphate synthase (flavodoxin) (405 aa).

4 residues coordinate [4Fe-4S] cluster: Cys-297, Cys-300, Cys-343, and Glu-350.

The protein belongs to the IspG family. Requires [4Fe-4S] cluster as cofactor.

It carries out the reaction (2E)-4-hydroxy-3-methylbut-2-enyl diphosphate + oxidized [flavodoxin] + H2O + 2 H(+) = 2-C-methyl-D-erythritol 2,4-cyclic diphosphate + reduced [flavodoxin]. Its pathway is isoprenoid biosynthesis; isopentenyl diphosphate biosynthesis via DXP pathway; isopentenyl diphosphate from 1-deoxy-D-xylulose 5-phosphate: step 5/6. Converts 2C-methyl-D-erythritol 2,4-cyclodiphosphate (ME-2,4cPP) into 1-hydroxy-2-methyl-2-(E)-butenyl 4-diphosphate. The protein is 4-hydroxy-3-methylbut-2-en-1-yl diphosphate synthase (flavodoxin) of Francisella tularensis subsp. novicida (strain U112).